Reading from the N-terminus, the 86-residue chain is Large ribosomal subunit protein bL27 (86 aa).

The disordered stretch occupies residues 1–22 (MAHKKAGGSTRNGRDSESKRLG).

The protein belongs to the bacterial ribosomal protein bL27 family.

The protein is Large ribosomal subunit protein bL27 of Vibrio cholerae serotype O1 (strain ATCC 39315 / El Tor Inaba N16961).